Consider the following 81-residue polypeptide: Carboxysome shell vertex protein CsoS4B (81 aa).

The region spanning 1-77 (MEVMRVRSDL…TDLTIGGIID (77 aa)) is the BMV domain.

It belongs to the CcmL/EutN family. CsoS4 subfamily. As to quaternary structure, homopentamer.

It localises to the carboxysome. Functionally, probably forms vertices in the carboxysome. Has been modeled to induce curvature upon insertion into an otherwise flat hexagonal layer of major carboxysome subunits. A minor shell protein, only 12 pentamers of CsoS4A/CsoS4B are calculated to be present in each carboxysome. The 2 CsoS4 proteins contribute to the impermeability of the carboxysome to CO(2). Its central pore is probably too small to allow passage of metabolites; its function might be to anchor different proteins or metabolites to the carboxysome. Unlike beta-carboxysomes, alpha-carboxysomes (Cb) can form without cargo protein. CsoS2 is essential for Cb formation and is also capable of targeting foreign proteins to the Cb. The Cb shell assembles with the aid of CsoS2; CsoS1A, CsoS1B and CsoS1C form the majority of the shell while CsoS4A and CsoS4B form vertices. CsoS1D forms pseudohexamers that probably control metabolite flux into and out of the shell. The protein is Carboxysome shell vertex protein CsoS4B of Halothiobacillus neapolitanus (strain ATCC 23641 / c2) (Thiobacillus neapolitanus).